The primary structure comprises 334 residues: Porphobilinogen deaminase (334 aa).

The residue at position 250 (Cys-250) is an S-(dipyrrolylmethanemethyl)cysteine.

This sequence belongs to the HMBS family. As to quaternary structure, monomer. Requires dipyrromethane as cofactor.

It catalyses the reaction 4 porphobilinogen + H2O = hydroxymethylbilane + 4 NH4(+). It participates in porphyrin-containing compound metabolism; protoporphyrin-IX biosynthesis; coproporphyrinogen-III from 5-aminolevulinate: step 2/4. Functionally, tetrapolymerization of the monopyrrole PBG into the hydroxymethylbilane pre-uroporphyrinogen in several discrete steps. This is Porphobilinogen deaminase from Cutibacterium acnes (strain DSM 16379 / KPA171202) (Propionibacterium acnes).